The primary structure comprises 238 residues: Probable transglycosylase SceD 1 (238 aa).

Residues 1-27 (MKKTVVASTLAVGLGVTGFAAGNSADA) form the signal peptide. Residues 87-97 (TNAPAQETAEQ) show a composition bias toward polar residues. Positions 87–161 (TNAPAQETAE…SEASEGSSVN (75 aa)) are disordered. A compositionally biased stretch (low complexity) spans 102-156 (EQPQQTEQASTEQPAQEAAPQTEETQQPQQEATTQTTSSSNESTSNESSSSEASE).

It belongs to the transglycosylase family. SceD subfamily.

The protein resides in the secreted. Its function is as follows. Is able to cleave peptidoglycan and affects clumping and separation of bacterial cells. The polypeptide is Probable transglycosylase SceD 1 (sceD1) (Staphylococcus saprophyticus subsp. saprophyticus (strain ATCC 15305 / DSM 20229 / NCIMB 8711 / NCTC 7292 / S-41)).